Reading from the N-terminus, the 383-residue chain is Sterol 24-C-methyltransferase ERG6 (383 aa).

At Ser-2 the chain carries N-acetylserine. Ser-99 carries the post-translational modification Phosphoserine.

This sequence belongs to the class I-like SAM-binding methyltransferase superfamily. Erg6/SMT family. In terms of assembly, interacts with ERG28.

It localises to the microsome. Its subcellular location is the mitochondrion. The enzyme catalyses zymosterol + S-adenosyl-L-methionine = fecosterol + S-adenosyl-L-homocysteine + H(+). The protein operates within steroid metabolism; ergosterol biosynthesis; ergosterol from zymosterol: step 1/5. In terms of biological role, sterol 24-C-methyltransferase; part of the third module of ergosterol biosynthesis pathway that includes the late steps of the pathway. ERG6 catalyzes the methyl transfer from S-adenosyl-methionine to the C-24 of zymosterol to form fecosterol. The third module or late pathway involves the ergosterol synthesis itself through consecutive reactions that mainly occur in the endoplasmic reticulum (ER) membrane. Firstly, the squalene synthase ERG9 catalyzes the condensation of 2 farnesyl pyrophosphate moieties to form squalene, which is the precursor of all steroids. Squalene synthase is crucial for balancing the incorporation of farnesyl diphosphate (FPP) into sterol and nonsterol isoprene synthesis. Secondly, the squalene epoxidase ERG1 catalyzes the stereospecific oxidation of squalene to (S)-2,3-epoxysqualene, which is considered to be a rate-limiting enzyme in steroid biosynthesis. Then, the lanosterol synthase ERG7 catalyzes the cyclization of (S)-2,3 oxidosqualene to lanosterol, a reaction that forms the sterol core. In the next steps, lanosterol is transformed to zymosterol through a complex process involving various demethylation, reduction and desaturation reactions. The lanosterol 14-alpha-demethylase ERG11 (also known as CYP51) catalyzes C14-demethylation of lanosterol to produce 4,4'-dimethyl cholesta-8,14,24-triene-3-beta-ol, which is critical for ergosterol biosynthesis. The C-14 reductase ERG24 reduces the C14=C15 double bond of 4,4-dimethyl-cholesta-8,14,24-trienol to produce 4,4-dimethyl-cholesta-8,24-dienol. 4,4-dimethyl-cholesta-8,24-dienol is substrate of the C-4 demethylation complex ERG25-ERG26-ERG27 in which ERG25 catalyzes the three-step monooxygenation required for the demethylation of 4,4-dimethyl and 4alpha-methylsterols, ERG26 catalyzes the oxidative decarboxylation that results in a reduction of the 3-beta-hydroxy group at the C-3 carbon to an oxo group, and ERG27 is responsible for the reduction of the keto group on the C-3. ERG28 has a role as a scaffold to help anchor ERG25, ERG26 and ERG27 to the endoplasmic reticulum and ERG29 regulates the activity of the iron-containing C4-methylsterol oxidase ERG25. Then, the sterol 24-C-methyltransferase ERG6 catalyzes the methyl transfer from S-adenosyl-methionine to the C-24 of zymosterol to form fecosterol. The C-8 sterol isomerase ERG2 catalyzes the reaction which results in unsaturation at C-7 in the B ring of sterols and thus converts fecosterol to episterol. The sterol-C5-desaturase ERG3 then catalyzes the introduction of a C-5 double bond in the B ring to produce 5-dehydroepisterol. The C-22 sterol desaturase ERG5 further converts 5-dehydroepisterol into ergosta-5,7,22,24(28)-tetraen-3beta-ol by forming the C-22(23) double bond in the sterol side chain. Finally, ergosta-5,7,22,24(28)-tetraen-3beta-ol is substrate of the C-24(28) sterol reductase ERG4 to produce ergosterol. The sequence is that of Sterol 24-C-methyltransferase ERG6 from Saccharomyces cerevisiae (strain ATCC 204508 / S288c) (Baker's yeast).